We begin with the raw amino-acid sequence, 313 residues long: Formimidoylglutamase (313 aa).

Mn(2+)-binding residues include H130, D155, H157, D159, D241, and D243.

The protein belongs to the arginase family. It depends on Mn(2+) as a cofactor.

It catalyses the reaction N-formimidoyl-L-glutamate + H2O = formamide + L-glutamate. Its pathway is amino-acid degradation; L-histidine degradation into L-glutamate; L-glutamate from N-formimidoyl-L-glutamate (hydrolase route): step 1/1. In terms of biological role, catalyzes the conversion of N-formimidoyl-L-glutamate to L-glutamate and formamide. The protein is Formimidoylglutamase of Salmonella paratyphi A (strain ATCC 9150 / SARB42).